A 595-amino-acid chain; its full sequence is uncharacterized protein (595 aa).

The next 9 membrane-spanning stretches (helical) occupy residues 64-84, 86-106, 239-259, 281-301, 334-354, 368-388, 504-524, 547-567, and 571-591; these read VVFL…LIVF, IFYA…IGVL, FYVI…PVAS, FYLW…GILP, VHFI…LFFI, MFGI…HFII, FIYV…SYIM, YLFQ…GILT, and IIAG…LFKF.

This sequence to M.jannaschii FlaJ.

The protein localises to the cell membrane. This is an uncharacterized protein from Methanocaldococcus jannaschii (strain ATCC 43067 / DSM 2661 / JAL-1 / JCM 10045 / NBRC 100440) (Methanococcus jannaschii).